The following is a 499-amino-acid chain: Cytochrome P450 2M1 (499 aa).

C441 is a heme binding site.

Belongs to the cytochrome P450 family. Heme serves as cofactor. As to expression, in kidney and in liver from juvenile and sexually mature trout from both sexes.

It localises to the endoplasmic reticulum membrane. The protein localises to the microsome membrane. The enzyme catalyses an organic molecule + reduced [NADPH--hemoprotein reductase] + O2 = an alcohol + oxidized [NADPH--hemoprotein reductase] + H2O + H(+). Its function is as follows. Has (omega-6)-hydroxylation activity toward lauric acid. This is Cytochrome P450 2M1 (cyp2m1) from Oncorhynchus mykiss (Rainbow trout).